A 404-amino-acid polypeptide reads, in one-letter code: LL-diaminopimelate aminotransferase (404 aa).

2 residues coordinate substrate: tyrosine 15 and glycine 42. Pyridoxal 5'-phosphate contacts are provided by residues tyrosine 72, 108–109, tyrosine 132, asparagine 188, tyrosine 219, and 247–249; these read AK and SFS. Lysine 109, tyrosine 132, and asparagine 188 together coordinate substrate. The residue at position 250 (lysine 250) is an N6-(pyridoxal phosphate)lysine. Positions 258 and 288 each coordinate pyridoxal 5'-phosphate. Residues asparagine 288 and arginine 384 each contribute to the substrate site.

The protein belongs to the class-I pyridoxal-phosphate-dependent aminotransferase family. LL-diaminopimelate aminotransferase subfamily. In terms of assembly, homodimer. Pyridoxal 5'-phosphate is required as a cofactor.

It carries out the reaction (2S,6S)-2,6-diaminopimelate + 2-oxoglutarate = (S)-2,3,4,5-tetrahydrodipicolinate + L-glutamate + H2O + H(+). The protein operates within amino-acid biosynthesis; L-lysine biosynthesis via DAP pathway; LL-2,6-diaminopimelate from (S)-tetrahydrodipicolinate (aminotransferase route): step 1/1. Functionally, involved in the synthesis of meso-diaminopimelate (m-DAP or DL-DAP), required for both lysine and peptidoglycan biosynthesis. Catalyzes the direct conversion of tetrahydrodipicolinate to LL-diaminopimelate. This chain is LL-diaminopimelate aminotransferase, found in Lachnospira eligens (strain ATCC 27750 / DSM 3376 / VPI C15-48 / C15-B4) (Eubacterium eligens).